A 571-amino-acid polypeptide reads, in one-letter code: Proline--tRNA ligase (571 aa).

It belongs to the class-II aminoacyl-tRNA synthetase family. ProS type 1 subfamily. Homodimer.

The protein localises to the cytoplasm. It carries out the reaction tRNA(Pro) + L-proline + ATP = L-prolyl-tRNA(Pro) + AMP + diphosphate. Functionally, catalyzes the attachment of proline to tRNA(Pro) in a two-step reaction: proline is first activated by ATP to form Pro-AMP and then transferred to the acceptor end of tRNA(Pro). As ProRS can inadvertently accommodate and process non-cognate amino acids such as alanine and cysteine, to avoid such errors it has two additional distinct editing activities against alanine. One activity is designated as 'pretransfer' editing and involves the tRNA(Pro)-independent hydrolysis of activated Ala-AMP. The other activity is designated 'posttransfer' editing and involves deacylation of mischarged Ala-tRNA(Pro). The misacylated Cys-tRNA(Pro) is not edited by ProRS. The chain is Proline--tRNA ligase from Aliivibrio fischeri (strain MJ11) (Vibrio fischeri).